Here is a 102-residue protein sequence, read N- to C-terminus: Small ribosomal subunit protein uS10 (102 aa).

Belongs to the universal ribosomal protein uS10 family. As to quaternary structure, part of the 30S ribosomal subunit.

Its function is as follows. Involved in the binding of tRNA to the ribosomes. This Geobacter sulfurreducens (strain ATCC 51573 / DSM 12127 / PCA) protein is Small ribosomal subunit protein uS10.